Reading from the N-terminus, the 325-residue chain is tRNA(Ile)-lysidine synthase (325 aa).

34 to 39 (SGGADS) is a binding site for ATP.

The protein belongs to the tRNA(Ile)-lysidine synthase family.

The protein localises to the cytoplasm. It catalyses the reaction cytidine(34) in tRNA(Ile2) + L-lysine + ATP = lysidine(34) in tRNA(Ile2) + AMP + diphosphate + H(+). In terms of biological role, ligates lysine onto the cytidine present at position 34 of the AUA codon-specific tRNA(Ile) that contains the anticodon CAU, in an ATP-dependent manner. Cytidine is converted to lysidine, thus changing the amino acid specificity of the tRNA from methionine to isoleucine. The protein is tRNA(Ile)-lysidine synthase of Rhodococcus erythropolis (strain PR4 / NBRC 100887).